A 238-amino-acid polypeptide reads, in one-letter code: Ribonuclease PH (238 aa).

Phosphate-binding positions include R86 and G124–R126.

It belongs to the RNase PH family. Homohexameric ring arranged as a trimer of dimers.

It carries out the reaction tRNA(n+1) + phosphate = tRNA(n) + a ribonucleoside 5'-diphosphate. Functionally, phosphorolytic 3'-5' exoribonuclease that plays an important role in tRNA 3'-end maturation. Removes nucleotide residues following the 3'-CCA terminus of tRNAs; can also add nucleotides to the ends of RNA molecules by using nucleoside diphosphates as substrates, but this may not be physiologically important. Probably plays a role in initiation of 16S rRNA degradation (leading to ribosome degradation) during starvation. The sequence is that of Ribonuclease PH from Actinobacillus pleuropneumoniae serotype 7 (strain AP76).